A 501-amino-acid chain; its full sequence is Glucans biosynthesis protein G (501 aa).

The N-terminal stretch at 1-24 is a signal peptide; that stretch reads MNRRQVLAALAAIPLLPEAFPANA.

Belongs to the OpgD/OpgG family.

It is found in the periplasm. It participates in glycan metabolism; osmoregulated periplasmic glucan (OPG) biosynthesis. Functionally, involved in the biosynthesis of osmoregulated periplasmic glucans (OPGs). This is Glucans biosynthesis protein G from Rhodopseudomonas palustris (strain BisA53).